A 236-amino-acid chain; its full sequence is Transmembrane protein 65 (236 aa).

A mitochondrion-targeting transit peptide spans 1–57 (MSRLLPLLRSRTARSLRPGPAAAAAPRPPSWCCCGRGLLALAAPGGPRALGTHPKKE). The Cytoplasmic segment spans residues 58–106 (PIEALNTAQGARDFIYSLHSSERSCLLKELHRFESIAIAQEKLEAQPPT). Residues 107–127 (PGQLRYVFIHNAIPFIGFGFL) form a helical membrane-spanning segment. Residues 128–138 (DNAIMIVAGTH) are Extracellular-facing. A helical transmembrane segment spans residues 139–161 (IELSIGIILGISTMAAAALGNLV). Residues 162–205 (SDLAGLGLAGYVEALASRLGLSIPDLSPKQVDMWQTRVSSHLGK) lie on the Cytoplasmic side of the membrane. Residues 206-226 (AVGVTIGCILGMFPLIFFGGG) form a helical membrane-spanning segment. At 227 to 236 (EDDEKLEKKN) the chain is on the extracellular side.

As to quaternary structure, monomer. Homodimer. Interacts with GJA1. Interacts weakly with DSP. Interacts with SCN1B.

Its subcellular location is the cell membrane. The protein localises to the mitochondrion inner membrane. Functionally, essential for maintaining proper cardiac intercalated disk (ICD) structure and function as well as cardiac conduction velocity in the heart. Its association with SCN1B is required for stabilizing the perinexus in the ICD and for localization of GJA1 and SCN5A to the ICD. May regulate the function of the gap junction protein GJA1 and may contribute to the stability and proper localization of GJA1 to cardiac intercalated disk thereby regulating gap junction communication. Regulates mitochondrial respiration and mitochondrial DNA copy number maintenance. The sequence is that of Transmembrane protein 65 (TMEM65) from Bos taurus (Bovine).